We begin with the raw amino-acid sequence, 177 residues long: MKLAQDMNVDEIFLKQAAEAIAVISSSPTHTDPIIRELLHRIRQSSPLSAVIPAPENVLKAGEPENMARGLIRIPETQTKRTGGNNHSKEGAQLYSCAKCQLKFSRSSDLRRHEKVHSLVLPHICSNCGKGFARKDALKRHSNTLTCQRNRKKLSEGSDVDVDELIKDAIKNGTGLL.

The C2H2-type zinc-finger motif lies at 95–117 (YSCAKCQLKFSRSSDLRRHEKVH).

In terms of assembly, interacts with MET4 and MET28.

The protein resides in the cytoplasm. The protein localises to the nucleus. Functionally, auxiliary transcriptional regulator of sulfur amino acid metabolism. Involved in the transcriptional activation of MET28. The chain is Transcriptional regulator MET31 (MET31) from Saccharomyces cerevisiae (strain ATCC 204508 / S288c) (Baker's yeast).